The chain runs to 518 residues: Putative succinate-semialdehyde dehydrogenase [NADP(+)] 2 (518 aa).

Residues 157–158 (WN), 181–184 (KPDS), and 232–233 (GS) contribute to the NADP(+) site. The Proton acceptor role is filled by Glu254. Leu255 lines the NADP(+) pocket. Cys288 serves as the catalytic Nucleophile. Glu386 contributes to the NADP(+) binding site.

The protein belongs to the aldehyde dehydrogenase family.

It carries out the reaction succinate semialdehyde + NADP(+) + H2O = succinate + NADPH + 2 H(+). Its function is as follows. Catalyzes the NADP(+)-dependent oxidation of succinate semialdehyde to succinate. Although it has succinate semialdehyde dehydrogenase activity, is likely to act physiologically on a different aldehyde(s). This Mycobacterium ulcerans (strain Agy99) protein is Putative succinate-semialdehyde dehydrogenase [NADP(+)] 2 (gabD2).